We begin with the raw amino-acid sequence, 712 residues long: Asp/Glu-specific dipeptidyl-peptidase (712 aa).

Positions 1–18 are cleaved as a signal peptide; that stretch reads MKRFFKMALFLGVSALYG. Catalysis depends on charge relay system residues His-84, Asp-220, and Ser-647.

This sequence belongs to the peptidase S46 family.

Catalyzes the removal of dipeptides from the N-terminus of oligopeptides. Shows a strict specificity for acidic residues (Asp or Glu) in the P1 position, and has probably a hydrophobic residue preference at the P2 position. Preferentially cleaves the synthetic substrate Leu-Asp-methylcoumaryl-7-amide (Leu-Asp-MCA) as compared to Leu-Glu-MCA. In Capnocytophaga gingivalis, this protein is Asp/Glu-specific dipeptidyl-peptidase (dpp11).